The chain runs to 79 residues: MVKLMDIDEFLNYLSNATKENFKKTKHFEIRIELREDNIPNEEELFEILTKNKPVGILKQKDDKFLRYIMSLMKNMMLL.

This is an uncharacterized protein from Methanocaldococcus jannaschii (strain ATCC 43067 / DSM 2661 / JAL-1 / JCM 10045 / NBRC 100440) (Methanococcus jannaschii).